The chain runs to 172 residues: MKLVSNKILFLATMVLASSSAFALKDDVNQPINIVSDNQSLDMEKSVVTFTDNVVITQGSIVIKANKVVITRPAEKSGKKETVEAFGTPVTFHQQLDNGKPVDGKANKVHYDLGNEFLTLTNNAELKQLDSKINGSVITYDVKKQQLKANGNGKSRVTTVLIPSQLQQAKGK.

The first 23 residues, 1–23 (MKLVSNKILFLATMVLASSSAFA), serve as a signal peptide directing secretion.

It belongs to the LptA family. As to quaternary structure, component of the lipopolysaccharide transport and assembly complex.

It localises to the periplasm. Functionally, involved in the assembly of lipopolysaccharide (LPS). Required for the translocation of LPS from the inner membrane to the outer membrane. May form a bridge between the inner membrane and the outer membrane, via interactions with LptC and LptD, thereby facilitating LPS transfer across the periplasm. This is Lipopolysaccharide export system protein LptA from Haemophilus influenzae (strain ATCC 51907 / DSM 11121 / KW20 / Rd).